The following is a 36-amino-acid chain: Amanexitide proprotein 1 (36 aa).

The propeptide occupies 1 to 10 (MSDINTARLP). The cyclopeptide (Val-Pro) cross-link spans 11 to 19 (VFSLPVFFP). Positions 20 to 36 (FVSDDIQAVLTRGESLC) are excised as a propeptide.

This sequence belongs to the MSDIN fungal toxin family. Processed by the macrocyclase-peptidase enzyme POPB to yield a toxic cyclic nonapeptide. POPB first removes 10 residues from the N-terminus. Conformational trapping of the remaining peptide forces the enzyme to release this intermediate rather than proceed to macrocyclization. The enzyme rebinds the remaining peptide in a different conformation and catalyzes macrocyclization of the N-terminal 9 residues. As to expression, expressed in basidiocarps.

In terms of biological role, cyclic nonapeptide that belongs to the MSDIN-like toxin family responsible for a large number of food poisoning cases and deaths. This chain is Amanexitide proprotein 1, found in Amanita exitialis (Guangzhou destroying angel).